The sequence spans 134 residues: Putative nickel-responsive regulator (134 aa).

Positions 78, 89, 91, and 97 each coordinate Ni(2+).

The protein belongs to the transcriptional regulatory CopG/NikR family. Requires Ni(2+) as cofactor.

In terms of biological role, transcriptional regulator. The polypeptide is Putative nickel-responsive regulator (Chlorobium limicola (strain DSM 245 / NBRC 103803 / 6330)).